The following is a 256-amino-acid chain: Deoxyribose-phosphate aldolase (256 aa).

Asp-102 acts as the Proton donor/acceptor in catalysis. Lys-165 acts as the Schiff-base intermediate with acetaldehyde in catalysis. Lys-197 serves as the catalytic Proton donor/acceptor.

The protein belongs to the DeoC/FbaB aldolase family. DeoC type 2 subfamily.

It localises to the cytoplasm. It carries out the reaction 2-deoxy-D-ribose 5-phosphate = D-glyceraldehyde 3-phosphate + acetaldehyde. It functions in the pathway carbohydrate degradation; 2-deoxy-D-ribose 1-phosphate degradation; D-glyceraldehyde 3-phosphate and acetaldehyde from 2-deoxy-alpha-D-ribose 1-phosphate: step 2/2. Its function is as follows. Catalyzes a reversible aldol reaction between acetaldehyde and D-glyceraldehyde 3-phosphate to generate 2-deoxy-D-ribose 5-phosphate. In Shewanella sp. (strain W3-18-1), this protein is Deoxyribose-phosphate aldolase.